A 111-amino-acid chain; its full sequence is WAP four-disulfide core domain protein 12 (111 aa).

The signal sequence occupies residues 1–23; it reads MGSSSFLVLTVSLALVTLVAAEG. Residues 27-74 enclose the WAP domain; sequence GIEKAGVCPADNVRCFKSDPPQCHTDQDCLGARKCCYLHCGFKCVIPV. Intrachain disulfides connect Cys34/Cys62, Cys41/Cys66, Cys49/Cys61, and Cys55/Cys70. The tract at residues 80–111 is disordered; it reads GGNKDEDVSGPCPEPGWEAKSPGSSSTGCPQK. Residues 101–111 are compositionally biased toward polar residues; that stretch reads PGSSSTGCPQK.

It localises to the secreted. Antibacterial protein. Putative acid-stable proteinase inhibitor. This Papio anubis (Olive baboon) protein is WAP four-disulfide core domain protein 12 (WFDC12).